Reading from the N-terminus, the 692-residue chain is E3 ubiquitin-protein ligase brl1 (692 aa).

Positions 302–370 (SNEEKIESIN…RNERDSLVAK (69 aa)) form a coiled coil. The RING-type zinc finger occupies 639–679 (CSVCNFSNWKSKLIPNCGHAFCSNCMEPFYEHKTSTCPQCE).

This sequence belongs to the BRE1 family. Component of the histone H2B ubiquitin ligase complex (HULC) composed of at least brl1, brl2, rhp6 and shf1.

Its subcellular location is the nucleus. The catalysed reaction is S-ubiquitinyl-[E2 ubiquitin-conjugating enzyme]-L-cysteine + [acceptor protein]-L-lysine = [E2 ubiquitin-conjugating enzyme]-L-cysteine + N(6)-ubiquitinyl-[acceptor protein]-L-lysine.. The protein operates within protein modification; protein ubiquitination. In terms of biological role, E3 ubiquitin-protein ligase which belongs to the histone H2B ubiquitin ligase complex (HULC) which mediates monoubiquitination of histone H2B to form H2BK123ub1. H2BK123ub1 gives a specific tag for epigenetic transcriptional activation and is also a prerequisite for H3K4me and H3K79me formation. The chain is E3 ubiquitin-protein ligase brl1 (brl1) from Schizosaccharomyces pombe (strain 972 / ATCC 24843) (Fission yeast).